Reading from the N-terminus, the 82-residue chain is Omega-conotoxin PnVIB (82 aa).

The first 22 residues, 1–22 (MKLTCMMIVAVLFLTAWTVVTA), serve as a signal peptide directing secretion. A propeptide spanning residues 23 to 52 (EPHSSNVLENLYLKAHHEMENPEASKLNTR) is cleaved from the precursor. 3 disulfide bridges follow: Cys56/Cys73, Cys63/Cys77, and Cys72/Cys81.

Expressed by the venom duct.

The protein resides in the secreted. Functionally, omega-conotoxins act at presynaptic membranes, they bind and block voltage-gated calcium channels (Cav). Acts on high voltage-activated (HVA) calcium currents in molluscan neurons. The polypeptide is Omega-conotoxin PnVIB (Conus pennaceus (Feathered cone)).